Here is a 689-residue protein sequence, read N- to C-terminus: MQNIDLISEEEAQKLLEELADKIAAYNHAYYIEDNPLVSDSEYDQLFNTNLKLEQKFPHLILENSPSKKVGAKIANKFAKVTHQVPMLSLSNAFDEQDVRDFVDRIKIFLRLNEFAPIFCEPKIDGLSFSAVYKHGVLTTGATRGDGYVGEDITANIKTIKNFPHKIDNVPEFLEVRGEIYIEKQDFLNLNKEQDEQGKDKFANPRNAAAGSLRQLDSSITAKRPLKYFVYSGGVTEQNLASSQDQLLTKLKECGFNINEISKLASSEEEIFAFYEYLKTNRENLPYEIDGVVYKLNDFVLQNRMGFIARSPRFATAHKFPAIIGQTKLLSITVQVGRTGTLTPVAELEPIEIGGVTVSRATLHNFQEIARKDLRIKDYVFLQRAGDVIPKIMGVDFDKRPNDTETFDTPLFCLSCNSKLHYTPEDIIIRCDNGLNCPAQNYERIRHFVSKNAMDIEGLGRKQVEFLIDKGLISNPLDIFFLKEKNDSSLAKLENMDGWGKKSVENLFKNIEKSKNVSLPRFIYALGIRHIGEQNAKLLAREFGSYNNFIAQMELLRTNEPDIYQKLNNLEGIGDKILVDIIDFFDVKENIELIKKLGGILNIEDYKETREQSSLTDKIVVFTGSLSTISRAEAKATAEKLGAKVAVGVSSNTDLVVAGVGAGSKLKKAKELNIKIIDEEEWLTLIKNV.

NAD(+)-binding positions include 40 to 44 (DSEYD), 89 to 90 (SL), and E121. Catalysis depends on K123, which acts as the N6-AMP-lysine intermediate. R144, E179, K295, and K319 together coordinate NAD(+). C413, C416, C431, and C437 together coordinate Zn(2+). The BRCT domain occupies 610–689 (REQSSLTDKI…EEWLTLIKNV (80 aa)).

Belongs to the NAD-dependent DNA ligase family. LigA subfamily. Mg(2+) serves as cofactor. The cofactor is Mn(2+).

The enzyme catalyses NAD(+) + (deoxyribonucleotide)n-3'-hydroxyl + 5'-phospho-(deoxyribonucleotide)m = (deoxyribonucleotide)n+m + AMP + beta-nicotinamide D-nucleotide.. DNA ligase that catalyzes the formation of phosphodiester linkages between 5'-phosphoryl and 3'-hydroxyl groups in double-stranded DNA using NAD as a coenzyme and as the energy source for the reaction. It is essential for DNA replication and repair of damaged DNA. In Rickettsia africae (strain ESF-5), this protein is DNA ligase.